Here is a 483-residue protein sequence, read N- to C-terminus: Altronate oxidoreductase (483 aa).

18-29 (IIQFGEGNFLRA) is a binding site for NAD(+).

The protein belongs to the mannitol dehydrogenase family. UxaB subfamily.

The catalysed reaction is D-altronate + NAD(+) = keto-D-tagaturonate + NADH + H(+). Its pathway is carbohydrate metabolism; pentose and glucuronate interconversion. The polypeptide is Altronate oxidoreductase (Yersinia pestis).